Reading from the N-terminus, the 672-residue chain is Flap endonuclease 1 (672 aa).

An N-domain region spans residues 1-106 (MGIKGLTKFI…SELEKRGEKR (106 aa)). Aspartate 34 serves as a coordination point for Mg(2+). Residues arginine 47 and arginine 72 each contribute to the DNA site. Mg(2+)-binding residues include aspartate 88, glutamate 160, glutamate 162, aspartate 181, and aspartate 183. Residues 124–266 (EIKKQSGRTV…KTAYNLIKEY (143 aa)) form an I-domain region. Position 160 (glutamate 160) interacts with DNA. Glycine 244 and aspartate 246 together coordinate DNA. Mg(2+) is bound at residue aspartate 246. Residues 349 to 357 (TQRRLDNFF) form an interaction with PCNA region. Residues 371-610 (ETKKEQTLPA…EDSPNSYNNI (240 aa)) are disordered. Basic and acidic residues-rich tracts occupy residues 413 to 493 (MKEE…KKSL), 502 to 526 (DSDK…EKIN), and 535 to 548 (DHSR…KDNI). The span at 549 to 584 (SDINNNNNNNNSSSNNNNISNNHFNSVSSNSTFNSS) shows a compositional bias: low complexity. Residues 587–603 (LKSEDTLKSNSPLKEDS) are compositionally biased toward basic and acidic residues.

The protein belongs to the XPG/RAD2 endonuclease family. FEN1 subfamily. In terms of assembly, interacts with PCNA1 and PCNA2. Three molecules of FEN1 bind to one PCNA trimer with each molecule binding to one PCNA monomer. PCNA stimulates the nuclease activity without altering cleavage specificity. Requires Mg(2+) as cofactor. Post-translationally, phosphorylated. Phosphorylation upon DNA damage induces relocalization to the nuclear plasma.

The protein localises to the nucleus. The protein resides in the nucleolus. It localises to the nucleoplasm. Its subcellular location is the mitochondrion. In terms of biological role, structure-specific nuclease with 5'-flap endonuclease and 5'-3' exonuclease activities involved in DNA replication and repair. During DNA replication, cleaves the 5'-overhanging flap structure that is generated by displacement synthesis when DNA polymerase encounters the 5'-end of a downstream Okazaki fragment. It enters the flap from the 5'-end and then tracks to cleave the flap base, leaving a nick for ligation. Also involved in the long patch base excision repair (LP-BER) pathway, by cleaving within the apurinic/apyrimidinic (AP) site-terminated flap. Acts as a genome stabilization factor that prevents flaps from equilibrating into structures that lead to duplications and deletions. Also possesses 5'-3' exonuclease activity on nicked or gapped double-stranded DNA, and exhibits RNase H activity. Also involved in replication and repair of rDNA and in repairing mitochondrial DNA. The protein is Flap endonuclease 1 of Plasmodium falciparum (isolate 3D7).